Reading from the N-terminus, the 441-residue chain is Collagen alpha-1(XXVI) chain (441 aa).

The N-terminal stretch at 1-20 (MKLALLLPWACCCLCGSALA) is a signal peptide. An EMI domain is found at 52–128 (RRHWCHHTVT…PGFTGSNCDE (77 aa)). 3 disulfide bridges follow: Cys-56–Cys-118, Cys-83–Cys-89, and Cys-117–Cys-126. N-linked (GlcNAc...) asparagine glycosylation occurs at Asn-70. The N-linked (GlcNAc...) asparagine glycan is linked to Asn-132. Disordered stretches follow at residues 156–362 (AERP…AEGE) and 390–441 (PLAS…SSRK). 2 Collagen-like domains span residues 199–267 (GPAG…PGPS) and 302–355 (GVPG…EGEK). Pro residues-rich tracts occupy residues 200–215 (PAGP…PAGP), 231–243 (AGPP…PGPR), 252–269 (PGPP…PSPN), and 306–327 (PRGP…PPGT). Residues 348–357 (VKGEEGEKAA) show a composition bias toward basic and acidic residues.

As to quaternary structure, homotrimer or heterotrimer. Post-translationally, hydroxylated on proline residues.

It is found in the secreted. The protein localises to the extracellular space. It localises to the extracellular matrix. In Homo sapiens (Human), this protein is Collagen alpha-1(XXVI) chain (COL26A1).